A 38-amino-acid polypeptide reads, in one-letter code: Large ribosomal subunit protein bL36 (38 aa).

It belongs to the bacterial ribosomal protein bL36 family.

This chain is Large ribosomal subunit protein bL36, found in Polynucleobacter necessarius subsp. necessarius (strain STIR1).